A 33-amino-acid polypeptide reads, in one-letter code: Potassium channel toxin alpha-KTx 24.1 (33 aa).

Intrachain disulfides connect Cys-4-Cys-23, Cys-9-Cys-28, Cys-13-Cys-30, and Cys-18-Cys-33.

The protein belongs to the short scorpion toxin superfamily. Potassium channel inhibitor family. Alpha-KTx 24 subfamily. Contains 4 disulfide bonds. In terms of tissue distribution, expressed by the venom gland.

Its subcellular location is the secreted. Reversibly blocks voltage-gated potassium channels Kv1.2/KCNA2, Kv1.3/KCNA3 and, weakly, Shaker B. The protein is Potassium channel toxin alpha-KTx 24.1 of Pandinus imperator (Emperor scorpion).